Here is a 100-residue protein sequence, read N- to C-terminus: Urease subunit gamma (100 aa).

This sequence belongs to the urease gamma subunit family. As to quaternary structure, heterotrimer of UreA (gamma), UreB (beta) and UreC (alpha) subunits. Three heterotrimers associate to form the active enzyme.

It localises to the cytoplasm. The enzyme catalyses urea + 2 H2O + H(+) = hydrogencarbonate + 2 NH4(+). Its pathway is nitrogen metabolism; urea degradation; CO(2) and NH(3) from urea (urease route): step 1/1. The chain is Urease subunit gamma from Escherichia coli O157:H7 (strain EC4115 / EHEC).